A 312-amino-acid polypeptide reads, in one-letter code: Methionyl-tRNA formyltransferase (312 aa).

109-112 (SLLP) provides a ligand contact to (6S)-5,6,7,8-tetrahydrofolate.

It belongs to the Fmt family.

It catalyses the reaction L-methionyl-tRNA(fMet) + (6R)-10-formyltetrahydrofolate = N-formyl-L-methionyl-tRNA(fMet) + (6S)-5,6,7,8-tetrahydrofolate + H(+). Attaches a formyl group to the free amino group of methionyl-tRNA(fMet). The formyl group appears to play a dual role in the initiator identity of N-formylmethionyl-tRNA by promoting its recognition by IF2 and preventing the misappropriation of this tRNA by the elongation apparatus. This is Methionyl-tRNA formyltransferase from Anaeromyxobacter dehalogenans (strain 2CP-C).